Here is a 295-residue protein sequence, read N- to C-terminus: CCAAT-binding factor complex subunit php4 (295 aa).

Positions 1-19 (MESSKSPSEVEKSSSASPA) are enriched in low complexity. A disordered region spans residues 1-69 (MESSKSPSEV…GPTSALSVEE (69 aa)). Positions 73–111 (RVREKQYQDTIGKLQKENNELLEQLEMLQAQLKNSTLDS) form a coiled coil. The short motif at 93–100 (LLEQLEML) is the Nuclear export signal element. The tract at residues 108 to 130 (TLDSPKEVEVNSEVVKPDSATTE) is disordered.

As to quaternary structure, component of tha CCAAT-binding complex composed of at least php2, php3, php4 and php5. Interacts with crm1 and grx4.

Its subcellular location is the cytoplasm. It localises to the nucleus. It is found in the cytoskeleton. The protein localises to the spindle pole. Component of the transcription regulatory CCAAT-binding complex. Required for the reprogramming of the cell for iron use. Down-regulates pcl1, sdh4, and isa1 underlow-iron conditions. The protein is CCAAT-binding factor complex subunit php4 (php4) of Schizosaccharomyces pombe (strain 972 / ATCC 24843) (Fission yeast).